A 210-amino-acid chain; its full sequence is Protein GrpE (210 aa).

Positions 1 to 71 (MSEKDQSVNN…DTKIKELEKL (71 aa)) are disordered. Residues 11–23 (TEEDFNVETEDNQ) are compositionally biased toward acidic residues. Positions 24–35 (NDTNIENSVSNT) are enriched in polar residues. The segment covering 36 to 46 (DNSEANASDSE) has biased composition (low complexity). The span at 47–60 (NNSEESIKDEESES) shows a compositional bias: acidic residues. The segment covering 61 to 71 (QDTKIKELEKL) has biased composition (basic and acidic residues).

This sequence belongs to the GrpE family. In terms of assembly, homodimer.

It localises to the cytoplasm. In terms of biological role, participates actively in the response to hyperosmotic and heat shock by preventing the aggregation of stress-denatured proteins, in association with DnaK and GrpE. It is the nucleotide exchange factor for DnaK and may function as a thermosensor. Unfolded proteins bind initially to DnaJ; upon interaction with the DnaJ-bound protein, DnaK hydrolyzes its bound ATP, resulting in the formation of a stable complex. GrpE releases ADP from DnaK; ATP binding to DnaK triggers the release of the substrate protein, thus completing the reaction cycle. Several rounds of ATP-dependent interactions between DnaJ, DnaK and GrpE are required for fully efficient folding. This Staphylococcus epidermidis (strain ATCC 35984 / DSM 28319 / BCRC 17069 / CCUG 31568 / BM 3577 / RP62A) protein is Protein GrpE.